Here is a 350-residue protein sequence, read N- to C-terminus: tRNA uridine(34) hydroxylase (350 aa).

The Rhodanese domain maps to D146–L240. C200 (cysteine persulfide intermediate) is an active-site residue.

This sequence belongs to the TrhO family.

The catalysed reaction is uridine(34) in tRNA + AH2 + O2 = 5-hydroxyuridine(34) in tRNA + A + H2O. Catalyzes oxygen-dependent 5-hydroxyuridine (ho5U) modification at position 34 in tRNAs, the first step in 5-carboxymethoxyuridine (cmo5U) biosynthesis. May be part of an alternate pathway, which is able to bypass cmo5U biogenesis in a subset of tRNAs under aerobic conditions. The polypeptide is tRNA uridine(34) hydroxylase (Escherichia coli (strain SMS-3-5 / SECEC)).